The following is a 497-amino-acid chain: Angiopoietin-1 (497 aa).

Residues 1–19 (MTVFLSFAFLAAILTHIGC) form the signal peptide. 5 N-linked (GlcNAc...) asparagine glycosylation sites follow: N92, N122, N154, N243, and N294. A coiled-coil region spans residues 158-256 (RLEIQLLENS…LQKQQLELMD (99 aa)). The Fibrinogen C-terminal domain occupies 276-496 (KEEEKPFRDC…STTMMIRPLD (221 aa)). 2 disulfide bridges follow: C285–C314 and C438–C451.

Homooligomer. Interacts with TEK/TIE2. Interacts with SVEP1/polydom. Interacts with THBD; this interaction significantly inhibits the generation of activated PC and TAFIa/CPB2 by the thrombin/thrombomodulin complex.

The protein resides in the secreted. Binds and activates TIE2 receptor by inducing its tyrosine phosphorylation. Implicated in endothelial developmental processes later and distinct from that of VEGF. Appears to play a crucial role in mediating reciprocal interactions between the endothelium and surrounding matrix and mesenchyme. Mediates blood vessel maturation/stability. It may play an important role in the heart early development. This is Angiopoietin-1 (ANGPT1) from Canis lupus familiaris (Dog).